The primary structure comprises 320 residues: MSPVLPRHDIEFPTLDGITLRGWLYPATKRGPGMILSPGFNMPKDAIIPDICKWFQERDITCLAWDPRGIGASDGEPRNDIDPRQEAEHLHDAVTWLSKNPLVDVTKIALWGLCFGGNVTLAAAALEYVLNGSPFSSPPCFVVPSWADIDLTLSKRIAAMISVAPLIDSTGLPERRQPILELAMYDRAGRLEGDDPMYLPYVNEDGSVPNGLQLAADMMPALDRLGIPVENRVTVQTYYRALTWSVLNLVEYIAPTPAMMVTPEFDVSCPTKDQLKAYERMGEPKELDILKGKGHLDWIFGDVDIILNRQLDFLKRQMNF.

Residues 58–298 (RDITCLAWDP…ILKGKGHLDW (241 aa)) are abhydrolase domain.

It belongs to the polyketide transferase af380 family.

Polyketide transferase; part of the gene cluster that mediates the biosynthesis of fujikurins A-D, secondary metabolites playing a role during rice infection. The polyketide synthase PKS19 acts with the trans-enoyl reductase FFUJ_12240 and the polyketide transferase FFUJ_12241 to produce fujikurins, however, the biosynthesis pathway has not been identified yet. The polypeptide is Polyketide transferase FFUJ_12241 (Gibberella fujikuroi (strain CBS 195.34 / IMI 58289 / NRRL A-6831) (Bakanae and foot rot disease fungus)).